The chain runs to 217 residues: Yop proteins translocation protein R (217 aa).

The next 4 membrane-spanning stretches (helical) occupy residues 11-31, 53-73, 157-177, and 181-201; these read IIVL…TSFV, MAMY…VGFA, IGFL…NILL, and MMMV…FVLL.

It belongs to the FliP/MopC/SpaP family.

The protein localises to the cell membrane. In terms of biological role, component of the yop secretion machinery. May have a role in the negative pathway regulation of yop expression controlled by calcium. This chain is Yop proteins translocation protein R (yscR), found in Yersinia pestis.